Reading from the N-terminus, the 219-residue chain is MLITFEGIDGAGKSTQIRKLQKLLIGAHIDSITLREPGGTEVAEKIRQILLESRHEISPIGELLLFSASRAELVQQVILPAIDNGTTVILDRFFDSTIAYQGYGREIDQVMLQTIITLSTFSLQPDITFYLDISPENALMRKFSEKSLPIAFDESELDRMERSGLDFFRKVRQGYLDIIHKNERRFVLLDALDDPQMIHKRIIASLKERFPVFSGIKTR.

Residue 7 to 14 coordinates ATP; the sequence is GIDGAGKS.

The protein belongs to the thymidylate kinase family.

The enzyme catalyses dTMP + ATP = dTDP + ADP. Functionally, phosphorylation of dTMP to form dTDP in both de novo and salvage pathways of dTTP synthesis. The sequence is that of Thymidylate kinase from Chlorobium limicola (strain DSM 245 / NBRC 103803 / 6330).